The chain runs to 170 residues: UPF0251 protein MA_1017 (170 aa).

The protein belongs to the UPF0251 family.

In Methanosarcina acetivorans (strain ATCC 35395 / DSM 2834 / JCM 12185 / C2A), this protein is UPF0251 protein MA_1017.